We begin with the raw amino-acid sequence, 292 residues long: 33 kDa chaperonin (292 aa).

Intrachain disulfides connect cysteine 230–cysteine 232 and cysteine 263–cysteine 266.

Belongs to the HSP33 family. In terms of processing, under oxidizing conditions two disulfide bonds are formed involving the reactive cysteines. Under reducing conditions zinc is bound to the reactive cysteines and the protein is inactive.

It is found in the cytoplasm. Redox regulated molecular chaperone. Protects both thermally unfolding and oxidatively damaged proteins from irreversible aggregation. Plays an important role in the bacterial defense system toward oxidative stress. The polypeptide is 33 kDa chaperonin (Shigella boydii serotype 4 (strain Sb227)).